Consider the following 605-residue polypeptide: Protein cueball (605 aa).

The signal sequence occupies residues 1-31 (MAYIDQKHNTFWDDFAIALRDKIVFLNSTWG). N-linked (GlcNAc...) asparagine glycosylation is found at asparagine 27, asparagine 64, and asparagine 85. The Extracellular portion of the chain corresponds to 32–486 (EIHASAHRFE…QCGPAPPVQG (455 aa)). 4 LDL-receptor class B repeats span residues 53 to 97 (EMIY…DPLN), 98 to 145 (RNLF…DICR), 146 to 190 (RQLY…DQLS), and 191 to 236 (DRIF…NEDA). Asparagine 261 and asparagine 314 each carry an N-linked (GlcNAc...) asparagine glycan. EGF-like domains are found at residues 322–359 (EGDR…ARCE) and 394–431 (EYHK…ERCE). Cystine bridges form between cysteine 334-cysteine 347, cysteine 349-cysteine 358, cysteine 398-cysteine 408, cysteine 402-cysteine 419, and cysteine 421-cysteine 430. N-linked (GlcNAc...) asparagine glycosylation is found at asparagine 433 and asparagine 464. The chain crosses the membrane as a helical span at residues 487–507 (PLIIVIVLGLVTTSGLVALTV). Topologically, residues 508-605 (HGVRLIYKPK…IHSMEDNLLS (98 aa)) are cytoplasmic.

Belongs to the cueball family.

The protein localises to the cell membrane. Its function is as follows. Has a role in spermatogenesis and oogenesis. This is Protein cueball from Drosophila grimshawi (Hawaiian fruit fly).